A 320-amino-acid chain; its full sequence is GTP 3',8-cyclase (320 aa).

The 221-residue stretch at 5-225 (QFDRKINYLR…IQLIKKDEKA (221 aa)) folds into the Radical SAM core domain. Position 14 (Arg-14) interacts with GTP. Residues Cys-21 and Cys-25 each coordinate [4Fe-4S] cluster. Position 27 (Tyr-27) interacts with S-adenosyl-L-methionine. A [4Fe-4S] cluster-binding site is contributed by Cys-28. Position 64 (Arg-64) interacts with GTP. Gly-68 serves as a coordination point for S-adenosyl-L-methionine. Thr-95 contributes to the GTP binding site. Ser-119 lines the S-adenosyl-L-methionine pocket. Lys-155 serves as a coordination point for GTP. Residue Met-189 participates in S-adenosyl-L-methionine binding. The [4Fe-4S] cluster site is built by Cys-248 and Cys-251. Residue 253-255 (RIR) coordinates GTP. Cys-265 is a binding site for [4Fe-4S] cluster.

It belongs to the radical SAM superfamily. MoaA family. Monomer and homodimer. Requires [4Fe-4S] cluster as cofactor.

The enzyme catalyses GTP + AH2 + S-adenosyl-L-methionine = (8S)-3',8-cyclo-7,8-dihydroguanosine 5'-triphosphate + 5'-deoxyadenosine + L-methionine + A + H(+). It functions in the pathway cofactor biosynthesis; molybdopterin biosynthesis. Its function is as follows. Catalyzes the cyclization of GTP to (8S)-3',8-cyclo-7,8-dihydroguanosine 5'-triphosphate. The sequence is that of GTP 3',8-cyclase from Campylobacter jejuni subsp. doylei (strain ATCC BAA-1458 / RM4099 / 269.97).